A 394-amino-acid chain; its full sequence is MARDYYEILGVSRDSSKEEIKRAYRRLARKYHPDVNKEPGAEERFKEINRAYEVLSDNELKARYDRFGEAGLSGAAAAASGFQDFAGMGGFADIFESFFTNFAGAGASYARSRQGPVRGDDLRFDLKLEFLEAIFGGEKQIRISHLEVCNVCGGSGAKPGTEVKTCPTCGGSGQVRRATRTPFGNFTQVSVCPTCGGSGQVLEEPCYNCNGEGLAQTTKKLRINIPAGVDSGTRLRVSGEGDAGRRGGPPGDLYVYLFVEPDPDFQRDGLTILSEVRVSYLQAILGAKVSVPTVDSKAGLEEEVELTIPAGSQPGTVLTLEGKGVPRIGNPMSRGDHQITLVVEIPTRISSEERELLMRLAELHGERINKRDGFLGGLLRGLAQMPGNREREEE.

The J domain maps to 4–68; the sequence is DYYEILGVSR…ELKARYDRFG (65 aa). A CR-type zinc finger spans residues 136–218; the sequence is GGEKQIRISH…CNGEGLAQTT (83 aa). Positions 149, 152, 166, 169, 192, 195, 206, and 209 each coordinate Zn(2+). CXXCXGXG motif repeat units lie at residues 149 to 156, 166 to 173, 192 to 199, and 206 to 213; these read CNVCGGSG, CPTCGGSG, and CYNCNGEG.

The protein belongs to the DnaJ family. Homodimer. Zn(2+) is required as a cofactor.

The protein localises to the cytoplasm. In terms of biological role, participates actively in the response to hyperosmotic and heat shock by preventing the aggregation of stress-denatured proteins and by disaggregating proteins, also in an autonomous, DnaK-independent fashion. Unfolded proteins bind initially to DnaJ; upon interaction with the DnaJ-bound protein, DnaK hydrolyzes its bound ATP, resulting in the formation of a stable complex. GrpE releases ADP from DnaK; ATP binding to DnaK triggers the release of the substrate protein, thus completing the reaction cycle. Several rounds of ATP-dependent interactions between DnaJ, DnaK and GrpE are required for fully efficient folding. Also involved, together with DnaK and GrpE, in the DNA replication of plasmids through activation of initiation proteins. This chain is Chaperone protein DnaJ, found in Synechococcus sp. (strain JA-2-3B'a(2-13)) (Cyanobacteria bacterium Yellowstone B-Prime).